Reading from the N-terminus, the 247-residue chain is Zinc finger protein YPR015C (247 aa).

2 C2H2-type zinc fingers span residues lysine 185–histidine 207 and phenylalanine 213–histidine 237.

In Saccharomyces cerevisiae (strain ATCC 204508 / S288c) (Baker's yeast), this protein is Zinc finger protein YPR015C.